The following is a 443-amino-acid chain: Trigger factor (443 aa).

The 86-residue stretch at 165-250 folds into the PPIase FKBP-type domain; the sequence is GDQVVMDFVG…IKEVKEPVAA (86 aa).

Belongs to the FKBP-type PPIase family. Tig subfamily.

The protein localises to the cytoplasm. It carries out the reaction [protein]-peptidylproline (omega=180) = [protein]-peptidylproline (omega=0). Functionally, involved in protein export. Acts as a chaperone by maintaining the newly synthesized protein in an open conformation. Functions as a peptidyl-prolyl cis-trans isomerase. The sequence is that of Trigger factor from Ruegeria pomeroyi (strain ATCC 700808 / DSM 15171 / DSS-3) (Silicibacter pomeroyi).